The chain runs to 237 residues: DNA repair protein RecO (237 aa).

Belongs to the RecO family.

Its function is as follows. Involved in DNA repair and RecF pathway recombination. The protein is DNA repair protein RecO of Cereibacter sphaeroides (strain ATCC 17025 / ATH 2.4.3) (Rhodobacter sphaeroides).